Reading from the N-terminus, the 176-residue chain is Large ribosomal subunit protein uL6 (176 aa).

This sequence belongs to the universal ribosomal protein uL6 family. In terms of assembly, part of the 50S ribosomal subunit.

In terms of biological role, this protein binds to the 23S rRNA, and is important in its secondary structure. It is located near the subunit interface in the base of the L7/L12 stalk, and near the tRNA binding site of the peptidyltransferase center. This is Large ribosomal subunit protein uL6 from Lactobacillus gasseri (strain ATCC 33323 / DSM 20243 / BCRC 14619 / CIP 102991 / JCM 1131 / KCTC 3163 / NCIMB 11718 / NCTC 13722 / AM63).